The sequence spans 182 residues: UPF0200 protein Mthe_1012 (182 aa).

An ATP-binding site is contributed by 8–15 (GMPGSGKS).

It belongs to the UPF0200 family.

The polypeptide is UPF0200 protein Mthe_1012 (Methanothrix thermoacetophila (strain DSM 6194 / JCM 14653 / NBRC 101360 / PT) (Methanosaeta thermophila)).